A 354-amino-acid chain; its full sequence is S-adenosylmethionine:tRNA ribosyltransferase-isomerase (354 aa).

Belongs to the QueA family. Monomer.

It localises to the cytoplasm. It carries out the reaction 7-aminomethyl-7-carbaguanosine(34) in tRNA + S-adenosyl-L-methionine = epoxyqueuosine(34) in tRNA + adenine + L-methionine + 2 H(+). Its pathway is tRNA modification; tRNA-queuosine biosynthesis. Its function is as follows. Transfers and isomerizes the ribose moiety from AdoMet to the 7-aminomethyl group of 7-deazaguanine (preQ1-tRNA) to give epoxyqueuosine (oQ-tRNA). The polypeptide is S-adenosylmethionine:tRNA ribosyltransferase-isomerase (Salmonella paratyphi A (strain ATCC 9150 / SARB42)).